The primary structure comprises 231 residues: ATP-dependent dethiobiotin synthetase BioD 2 (231 aa).

13 to 18 contributes to the ATP binding site; sequence SVGKTV. Thr17 lines the Mg(2+) pocket. Residue Lys38 is part of the active site. Residues Asp55, 112–115, 172–173, 201–203, and Gln208 contribute to the ATP site; these read EGTG, NR, and PYL. Mg(2+)-binding residues include Asp55 and Glu112.

The protein belongs to the dethiobiotin synthetase family. In terms of assembly, homodimer. The cofactor is Mg(2+).

It localises to the cytoplasm. The catalysed reaction is (7R,8S)-7,8-diammoniononanoate + CO2 + ATP = (4R,5S)-dethiobiotin + ADP + phosphate + 3 H(+). Its pathway is cofactor biosynthesis; biotin biosynthesis; biotin from 7,8-diaminononanoate: step 1/2. Its function is as follows. Catalyzes a mechanistically unusual reaction, the ATP-dependent insertion of CO2 between the N7 and N8 nitrogen atoms of 7,8-diaminopelargonic acid (DAPA, also called 7,8-diammoniononanoate) to form a ureido ring. The chain is ATP-dependent dethiobiotin synthetase BioD 2 from Salmonella typhi.